A 354-amino-acid polypeptide reads, in one-letter code: Peptide chain release factor 1 (354 aa).

An N5-methylglutamine modification is found at glutamine 233.

Belongs to the prokaryotic/mitochondrial release factor family. Methylated by PrmC. Methylation increases the termination efficiency of RF1.

The protein localises to the cytoplasm. Peptide chain release factor 1 directs the termination of translation in response to the peptide chain termination codons UAG and UAA. The protein is Peptide chain release factor 1 of Clostridioides difficile (strain 630) (Peptoclostridium difficile).